Reading from the N-terminus, the 1017-residue chain is Peroxisomal ATPase PEX6 (1017 aa).

Residue 758-765 (GPPGTGKT) coordinates ATP.

It belongs to the AAA ATPase family. Interacts with PEX1; forming the PEX1-PEX6 AAA ATPase complex, which is composed of a heterohexamer formed by a trimer of PEX1-PEX6 dimers.

Its subcellular location is the cytoplasm. It localises to the cytosol. The protein localises to the peroxisome membrane. It catalyses the reaction ATP + H2O = ADP + phosphate + H(+). Component of the PEX1-PEX6 AAA ATPase complex, a protein dislocase complex that mediates the ATP-dependent extraction of the PEX5 receptor from peroxisomal membranes, an essential step for PEX5 recycling. Specifically recognizes PEX5 monoubiquitinated at 'Cys-6', and pulls it out of the peroxisome lumen through the PEX2-PEX10-PEX12 retrotranslocation channel. Extraction by the PEX1-PEX6 AAA ATPase complex is accompanied by unfolding of the TPR repeats and release of bound cargo from PEX5. The protein is Peroxisomal ATPase PEX6 (PEX6) of Candida glabrata (strain ATCC 2001 / BCRC 20586 / JCM 3761 / NBRC 0622 / NRRL Y-65 / CBS 138) (Yeast).